Here is a 313-residue protein sequence, read N- to C-terminus: Ribosomal RNA small subunit methyltransferase H (313 aa).

S-adenosyl-L-methionine contacts are provided by residues 33–35 (AGH), Glu-52, Phe-80, Asp-101, and Gln-108.

It belongs to the methyltransferase superfamily. RsmH family.

Its subcellular location is the cytoplasm. It carries out the reaction cytidine(1402) in 16S rRNA + S-adenosyl-L-methionine = N(4)-methylcytidine(1402) in 16S rRNA + S-adenosyl-L-homocysteine + H(+). Functionally, specifically methylates the N4 position of cytidine in position 1402 (C1402) of 16S rRNA. The polypeptide is Ribosomal RNA small subunit methyltransferase H (Spiroplasma kunkelii).